A 309-amino-acid chain; its full sequence is Tagatose-6-phosphate kinase (309 aa).

This sequence belongs to the carbohydrate kinase PfkB family. LacC subfamily.

The enzyme catalyses D-tagatofuranose 6-phosphate + ATP = D-tagatofuranose 1,6-bisphosphate + ADP + H(+). It participates in carbohydrate metabolism; D-tagatose 6-phosphate degradation; D-glyceraldehyde 3-phosphate and glycerone phosphate from D-tagatose 6-phosphate: step 1/2. The polypeptide is Tagatose-6-phosphate kinase (Streptococcus pneumoniae serotype 19F (strain G54)).